The chain runs to 290 residues: 33 kDa chaperonin (290 aa).

Cystine bridges form between C235-C237 and C268-C271.

This sequence belongs to the HSP33 family. In terms of processing, under oxidizing conditions two disulfide bonds are formed involving the reactive cysteines. Under reducing conditions zinc is bound to the reactive cysteines and the protein is inactive.

It is found in the cytoplasm. In terms of biological role, redox regulated molecular chaperone. Protects both thermally unfolding and oxidatively damaged proteins from irreversible aggregation. Plays an important role in the bacterial defense system toward oxidative stress. This chain is 33 kDa chaperonin, found in Streptococcus pyogenes serotype M12 (strain MGAS2096).